The chain runs to 421 residues: Mitochondrial distribution and morphology protein 10 (421 aa).

The protein belongs to the MDM10 family. As to quaternary structure, component of the ER-mitochondria encounter structure (ERMES) or MDM complex, composed of MMM1, MDM10, MDM12 and MDM34. Associates with the mitochondrial outer membrane sorting assembly machinery SAM(core) complex.

The protein resides in the mitochondrion outer membrane. In terms of biological role, component of the ERMES/MDM complex, which serves as a molecular tether to connect the endoplasmic reticulum and mitochondria. Components of this complex are involved in the control of mitochondrial shape and protein biogenesis and may function in phospholipid exchange. MDM10 is involved in the late assembly steps of the general translocase of the mitochondrial outer membrane (TOM complex). Functions in the TOM40-specific route of the assembly of outer membrane beta-barrel proteins, including the association of TOM40 with the receptor TOM22 and small TOM proteins. Can associate with the SAM(core) complex as well as the MDM12-MMM1 complex, both involved in late steps of the major beta-barrel assembly pathway, that is responsible for biogenesis of all outer membrane beta-barrel proteins. May act as a switch that shuttles between both complexes and channels precursor proteins into the TOM40-specific pathway. Plays a role in mitochondrial morphology and in the inheritance of mitochondria. In Vanderwaltozyma polyspora (strain ATCC 22028 / DSM 70294 / BCRC 21397 / CBS 2163 / NBRC 10782 / NRRL Y-8283 / UCD 57-17) (Kluyveromyces polysporus), this protein is Mitochondrial distribution and morphology protein 10.